Consider the following 558-residue polypeptide: Zinc finger protein piragua (558 aa).

Residues 15 to 94 (STCRLCHHNT…QEREQSLQEQ (80 aa)) enclose the ZAD domain. Zn(2+) is bound by residues Cys-17, Cys-20, Cys-67, and Cys-70. Residues 132–177 (LAESSEEEFALGSDGEYENYDDDDEEEEEDYDEEDEEDGQNGEDVD) are compositionally biased toward acidic residues. Residues 132-178 (LAESSEEEFALGSDGEYENYDDDDEEEEEDYDEEDEEDGQNGEDVDM) are disordered. C2H2-type zinc fingers lie at residues 208 to 231 (FLCQ…LAAH), 237 to 260 (YCCN…KTLH), 266 to 288 (YVCA…TIVH), 294 to 316 (FTCN…MRIH), 322 to 344 (FVCQ…TRSH), 350 to 372 (FQCG…QQVH), 414 to 436 (YHCD…QALH), 441 to 464 (FACK…LEAH), and 468 to 490 (FTCG…LKVH).

Functionally, may be involved in transcriptional regulation. The function of this protein is unclear. According to one report, it is required for development and viability since mutants display defects in several developmental morphogenetic processes including dorsal closure and head involution, and die by the first instar larval stage. It may also be involved in fwe-mediated cellular competition. However, according to another report, it is not required for development or viability since mutants have no visible phenotype and are fertile. This Drosophila melanogaster (Fruit fly) protein is Zinc finger protein piragua.